The primary structure comprises 463 residues: Phytase A (463 aa).

An N-terminal signal peptide occupies residues 1–19 (MAFFTVALSLYYLLSRVST). N26 carries N-linked (GlcNAc...) asparagine glycosylation. C29 and C38 are disulfide-bonded. A glycan (N-linked (GlcNAc...) asparagine) is linked at N41. Residues Q48, Y49, R79, H80, R83, and T86 each contribute to the 1D-myo-inositol hexakisphosphate site. 4 disulfide bridges follow: C69/C410, C211/C460, C260/C278, and C431/C439. H80 functions as the Nucleophile in the catalytic mechanism. N103 and N118 each carry an N-linked (GlcNAc...) asparagine glycan. A 1D-myo-inositol hexakisphosphate-binding site is contributed by R163. N203 is a glycosylation site (N-linked (GlcNAc...) asparagine). D207 is a 1D-myo-inositol hexakisphosphate binding site. N226 is a glycosylation site (N-linked (GlcNAc...) asparagine). Residue K297 coordinates 1D-myo-inositol hexakisphosphate. 2 N-linked (GlcNAc...) asparagine glycosylation sites follow: N331 and N335. H357 and D358 together coordinate 1D-myo-inositol hexakisphosphate. N372 carries N-linked (GlcNAc...) asparagine glycosylation.

The protein belongs to the histidine acid phosphatase family. In terms of assembly, monomer. In terms of processing, seems to be cleaved into at least two pieces, most likely due to proteases in the supernatant. The N-terminal fragment, called phyB seems to retain phytase activity.

The protein resides in the secreted. The enzyme catalyses 1D-myo-inositol hexakisphosphate + H2O = 1D-myo-inositol 1,2,4,5,6-pentakisphosphate + phosphate. The catalysed reaction is 1D-myo-inositol 1,2,4,5,6-pentakisphosphate + H2O = 1D-myo-inositol 1,2,5,6-tetrakisphosphate + phosphate. It carries out the reaction 1D-myo-inositol 1,2,5,6-tetrakisphosphate + H2O = 1D-myo-inositol 1,2,6-trisphosphate + phosphate. It catalyses the reaction 1D-myo-inositol 1,2,6-trisphosphate + H2O = 1D-myo-inositol 1,2-bisphosphate + phosphate. The enzyme catalyses 1D-myo-inositol 1,2-bisphosphate + H2O = 1D-myo-inositol 2-phosphate + phosphate. Its function is as follows. Catalyzes the phosphate monoester hydrolysis of phytic acid (myo-inositol hexakisphosphate), which results in the stepwise formation of myo-inositol pentakis-, tetrakis-, tris-, bis-, and monophosphates, as well as the liberation of inorganic phosphate. Myo-inositol 2-monophosphate is the end product. Has a broad substrate specificity and is also able to dephosphorylate other classic acid phosphatase substrates such as p-nitrophenyl phosphate, phenyl phosphate, fructose 1,6-bisphosphate, fructose 6-phosphate, glucose 6-phosphate, ribose 5-phosphate, alpha-glycerophosphate, beta-glycerophosphate, 3-phosphoglycerate, as well as ADP and ATP. The sequence is that of Phytase A from Emericella nidulans (strain FGSC A4 / ATCC 38163 / CBS 112.46 / NRRL 194 / M139) (Aspergillus nidulans).